Reading from the N-terminus, the 353-residue chain is Rhodopsin (353 aa).

The Extracellular segment spans residues 1–36; it reads MNGTEGPYFYIPMVNTTGIVRSPYEYPQYYLVNPAA. N2 and N15 each carry an N-linked (GlcNAc...) asparagine glycan. Residues 37-61 form a helical membrane-spanning segment; that stretch reads YAALGAYMFLLILIGFPVNFLTLYV. Residues 62 to 73 lie on the Cytoplasmic side of the membrane; that stretch reads TIEHKKLRTPLN. Residues 74 to 96 form a helical membrane-spanning segment; that stretch reads YILLNLAVADLFMVFGGFTTTMY. The Extracellular segment spans residues 97 to 110; it reads TSMHGYFVLGRLGC. C110 and C187 form a disulfide bridge. A helical membrane pass occupies residues 111 to 133; the sequence is NLEGFFATLGGEIALWSLVVLAV. Positions 134 to 136 match the 'Ionic lock' involved in activated form stabilization motif; that stretch reads ERW. Residues 134 to 152 lie on the Cytoplasmic side of the membrane; that stretch reads ERWMVVCKPISNFRFGEDH. The helical transmembrane segment at 153-173 threads the bilayer; sequence AIMGLAFTWVMAAACAVPPLV. The Extracellular portion of the chain corresponds to 174–202; the sequence is GWSRYIPEGMQCSCGIDYYTRAEGFNNES. The N-linked (GlcNAc...) asparagine glycan is linked to N200. Residues 203 to 224 traverse the membrane as a helical segment; that stretch reads FVIYMFVCHFLIPLVVVFFCYG. At 225–252 the chain is on the cytoplasmic side; it reads RLLCAVKEAAAAQQESETTQRAEREVSR. The helical transmembrane segment at 253 to 274 threads the bilayer; it reads MVVIMVVAFLVCWCPYAGVAWY. Residues 275–286 are Extracellular-facing; sequence IFTHQGSEFGPL. Residues 287-308 traverse the membrane as a helical segment; it reads FMTFPAFFAKSSSIYNPMIYIC. An N6-(retinylidene)lysine modification is found at K296. Residues 309-353 lie on the Cytoplasmic side of the membrane; it reads MNKQFRQCMITTLCCGKNPFEEEEGASTTSKTEASSVSSSSVSPA. S-palmitoyl cysteine attachment occurs at residues C322 and C323. The disordered stretch occupies residues 329–353; that stretch reads EEEEGASTTSKTEASSVSSSSVSPA. Low complexity predominate over residues 334 to 353; it reads ASTTSKTEASSVSSSSVSPA.

This sequence belongs to the G-protein coupled receptor 1 family. Opsin subfamily. In terms of processing, phosphorylated on some or all of the serine and threonine residues present in the C-terminal region. Contains one covalently linked retinal chromophore.

It localises to the membrane. It is found in the cell projection. Its subcellular location is the cilium. The protein localises to the photoreceptor outer segment. Photoreceptor required for image-forming vision at low light intensity. While most salt water fish species use retinal as chromophore, most freshwater fish use 3-dehydroretinal, or a mixture of retinal and 3-dehydroretinal. Light-induced isomerization of 11-cis to all-trans retinal triggers a conformational change that activates signaling via G-proteins. Subsequent receptor phosphorylation mediates displacement of the bound G-protein alpha subunit by arrestin and terminates signaling. The polypeptide is Rhodopsin (rho) (Chelon auratus (Golden grey mullet)).